Here is a 171-residue protein sequence, read N- to C-terminus: L-methionine sulfoximine/L-methionine sulfone acetyltransferase (171 aa).

An N-acetyltransferase domain is found at 1–163 (MTIRFADKAD…DLTFMQLQLD (163 aa)). Substrate-binding positions include 72–74 (RSF) and 82–84 (EHS). Acetyl-CoA is bound by residues 85–87 (VYV), 93–98 (GKGLGR), asparagine 124, and serine 133.

As to quaternary structure, homodimer.

The enzyme catalyses L-methionine sulfoximine + acetyl-CoA = N-acetyl-L-methionine sulfoximine + CoA + H(+). It carries out the reaction L-methionine sulfone + acetyl-CoA = N-acetyl-L-methionine sulfone + CoA + H(+). Functionally, plays a role in the resistance against the toxic effects of L-methionine sulfoximine (MSX), a rare amino acid which inhibits glutamine synthetase (GlnA). Catalyzes the acetylation of MSX. It can also use L-methionine sulfone (MSO). Also catalyzes the acylation of free L-amino acids using an acyl-CoA as acyl donor. In Salmonella typhimurium (strain LT2 / SGSC1412 / ATCC 700720), this protein is L-methionine sulfoximine/L-methionine sulfone acetyltransferase (yncA).